Consider the following 114-residue polypeptide: Large ribosomal subunit protein uL24 (114 aa).

Belongs to the universal ribosomal protein uL24 family. In terms of assembly, part of the 50S ribosomal subunit.

In terms of biological role, one of two assembly initiator proteins, it binds directly to the 5'-end of the 23S rRNA, where it nucleates assembly of the 50S subunit. Its function is as follows. One of the proteins that surrounds the polypeptide exit tunnel on the outside of the subunit. The sequence is that of Large ribosomal subunit protein uL24 from Thermomicrobium roseum (strain ATCC 27502 / DSM 5159 / P-2).